Here is a 104-residue protein sequence, read N- to C-terminus: Transcription initiation factor IIA subunit 2 (104 aa).

The protein belongs to the TFIIA subunit 2 family. As to quaternary structure, TFIIA is a heterodimer of the large unprocessed subunit 1 and a small subunit gamma.

Its subcellular location is the nucleus. Its function is as follows. TFIIA is a component of the transcription machinery of RNA polymerase II and plays an important role in transcriptional activation. TFIIA in a complex with TBP mediates transcriptional activity. In Schistosoma mansoni (Blood fluke), this protein is Transcription initiation factor IIA subunit 2.